Here is a 233-residue protein sequence, read N- to C-terminus: MNIIKVNNASQGAARAYDIFAETLTKGATVFGLATGSTPVPLYQRLVESPLDFSQATAINLDEYLGLSGNDPQSYHFFMAQHLFNHKAFKQTFIPDGKNPDRQAATSQYDRIIEENPIDLQLLGLGRNGHIGFNEPGTAFDSKTHIVDLTQSTIDANARFFDHEVDVPTQAISMGIGSVMSAKHILLMAFGAEKADAVAQMISGPITEKLPASVLQQHPNVTVIIDDAAAAKL.

The active-site Proton acceptor; for enolization step is the D62. The active-site For ring-opening step is N128. The Proton acceptor; for ring-opening step role is filled by H130. E135 acts as the For ring-opening step in catalysis.

Belongs to the glucosamine/galactosamine-6-phosphate isomerase family. NagB subfamily.

The enzyme catalyses alpha-D-glucosamine 6-phosphate + H2O = beta-D-fructose 6-phosphate + NH4(+). It participates in amino-sugar metabolism; N-acetylneuraminate degradation; D-fructose 6-phosphate from N-acetylneuraminate: step 5/5. Catalyzes the reversible isomerization-deamination of glucosamine 6-phosphate (GlcN6P) to form fructose 6-phosphate (Fru6P) and ammonium ion. This Leuconostoc citreum (strain KM20) protein is Glucosamine-6-phosphate deaminase.